The following is a 59-amino-acid chain: Large ribosomal subunit protein uL30 (59 aa).

The protein belongs to the universal ribosomal protein uL30 family. As to quaternary structure, part of the 50S ribosomal subunit.

The protein is Large ribosomal subunit protein uL30 of Leptospira biflexa serovar Patoc (strain Patoc 1 / ATCC 23582 / Paris).